Reading from the N-terminus, the 132-residue chain is Agouti-related protein (132 aa).

The N-terminal stretch at 1 to 20 is a signal peptide; the sequence is MLTAAVLSCALLLALPATRG. Residues 21-82 constitute a propeptide that is removed on maturation; it reads AQMGLAPMEG…VLDLQDREPR (62 aa). 5 disulfides stabilise this stretch: Cys87-Cys102, Cys94-Cys108, Cys101-Cys119, Cys105-Cys129, and Cys110-Cys117. The Agouti domain maps to 87-129; that stretch reads CVRLHESCLGQQVPCCDPCATCYCRFFNAFCYCRKLGTAMNPC. An interaction with melanocortin receptors region spans residues 111-113; the sequence is RFF.

As to quaternary structure, interacts with melanocortin receptors MC3R, MC4R and MC5R. In terms of tissue distribution, expressed primarily in the adrenal gland, subthalamic nucleus, and hypothalamus, with a lower level of expression occurring in testis, lung, and kidney.

Its subcellular location is the secreted. The protein resides in the golgi apparatus lumen. Plays a role in weight homeostasis. Involved in the control of feeding behavior through the central melanocortin system. Acts as alpha melanocyte-stimulating hormone antagonist by inhibiting cAMP production mediated by stimulation of melanocortin receptors within the hypothalamus and adrenal gland. Has very low activity with MC5R. Is an inverse agonist for MC3R and MC4R being able to suppress their constitutive activity. It promotes MC3R and MC4R endocytosis in an arrestin-dependent manner. The polypeptide is Agouti-related protein (AGRP) (Homo sapiens (Human)).